Consider the following 141-residue polypeptide: MLMPRKPPKGFRKPHHPDRSGASKGGNRVVFGEFGIQALEPAYVTNRQIESARIAMTRHIKRGGKVWITIFPDQALTKKPAETRMGSGKGSPEWWVANVKPGRVLFEMSFPNEQIAREAMRRAIHKLPMKCRIVTREVGES.

Residues 1–16 (MLMPRKPPKGFRKPHH) show a composition bias toward basic residues. The tract at residues 1–27 (MLMPRKPPKGFRKPHHPDRSGASKGGN) is disordered.

The protein belongs to the universal ribosomal protein uL16 family. In terms of assembly, part of the 50S ribosomal subunit.

Its function is as follows. Binds 23S rRNA and is also seen to make contacts with the A and possibly P site tRNAs. The polypeptide is Large ribosomal subunit protein uL16 (Salinispora arenicola (strain CNS-205)).